The following is a 285-amino-acid chain: MAQHTIDQTQVIHTKPSALSYKEKTLVMGILNVTPDSFSDGGKYDSLDKALLHAKEMIDDGAHIIDIGGESTRPGAECVSEDEEMSRVIPVIERITKELGVPISVDTYKASVADEAVKAGASIINDIWGAKHDPKMASVAAEHNVPIVLMHNRPERNYNDLLPDMLSDLMESVKIAVEAGVDEKNIILDPGIGFAKTYHDNLAVMNKLEIFSGLGYPVLLATSRKRFIGRVLDLPPEERAEGTGATVCLGIQKGCDIVRVHDVKQIARMAKMMDAMLNKGGVHHG.

A Pterin-binding domain is found at 25–271; that stretch reads TLVMGILNVT…DVKQIARMAK (247 aa). N32 contributes to the Mg(2+) binding site. Residues T72, D106, N125, D189, K225, and 259 to 261 each bind (7,8-dihydropterin-6-yl)methyl diphosphate; that span reads RVH.

Belongs to the DHPS family. Mg(2+) serves as cofactor.

The enzyme catalyses (7,8-dihydropterin-6-yl)methyl diphosphate + 4-aminobenzoate = 7,8-dihydropteroate + diphosphate. Its pathway is cofactor biosynthesis; tetrahydrofolate biosynthesis; 7,8-dihydrofolate from 2-amino-4-hydroxy-6-hydroxymethyl-7,8-dihydropteridine diphosphate and 4-aminobenzoate: step 1/2. Its function is as follows. Catalyzes the condensation of para-aminobenzoate (pABA) with 6-hydroxymethyl-7,8-dihydropterin diphosphate (DHPt-PP) to form 7,8-dihydropteroate (H2Pte), the immediate precursor of folate derivatives. This chain is Dihydropteroate synthase (sul), found in Bacillus subtilis (strain 168).